The following is a 738-amino-acid chain: 1,4-alpha-glucan branching enzyme GlgB (738 aa).

Asp399 acts as the Nucleophile in catalysis. Glu452 acts as the Proton donor in catalysis.

The protein belongs to the glycosyl hydrolase 13 family. GlgB subfamily. Monomer.

The catalysed reaction is Transfers a segment of a (1-&gt;4)-alpha-D-glucan chain to a primary hydroxy group in a similar glucan chain.. The protein operates within glycan biosynthesis; glycogen biosynthesis. Functionally, catalyzes the formation of the alpha-1,6-glucosidic linkages in glycogen by scission of a 1,4-alpha-linked oligosaccharide from growing alpha-1,4-glucan chains and the subsequent attachment of the oligosaccharide to the alpha-1,6 position. The polypeptide is 1,4-alpha-glucan branching enzyme GlgB (Chlamydia trachomatis serovar L2 (strain ATCC VR-902B / DSM 19102 / 434/Bu)).